The primary structure comprises 241 residues: Uridylate kinase (241 aa).

15–18 is a binding site for ATP; it reads KMSG. Residues 23–28 are involved in allosteric activation by GTP; the sequence is GAEGFG. A UMP-binding site is contributed by glycine 57. Positions 58 and 62 each coordinate ATP. UMP contacts are provided by residues aspartate 77 and 138–145; that span reads TGNPLFTT. Threonine 165, phenylalanine 171, and aspartate 174 together coordinate ATP.

The protein belongs to the UMP kinase family. As to quaternary structure, homohexamer.

It is found in the cytoplasm. It carries out the reaction UMP + ATP = UDP + ADP. Its pathway is pyrimidine metabolism; CTP biosynthesis via de novo pathway; UDP from UMP (UMPK route): step 1/1. Its activity is regulated as follows. Allosterically activated by GTP. Inhibited by UTP. Catalyzes the reversible phosphorylation of UMP to UDP. This chain is Uridylate kinase, found in Blochmanniella pennsylvanica (strain BPEN).